The chain runs to 218 residues: Fucoxanthin-chlorophyll a-c binding protein, chloroplastic (218 aa).

A chloroplast-targeting transit peptide spans 1-36; that stretch reads MFYSAAVAALMVGSASAFLAPAQFNSVAKSSGALSM.

The protein belongs to the fucoxanthin chlorophyll protein family. The LHC complex of chromophytic algae is composed of fucoxanthin, chlorophyll A and C bound non-covalently by fucoxanthin chlorophyll proteins (FCPs). The ratio of pigments in this LHC is; fucoxanthin: chlorophyll C: chlorophyll A; (0.6-1): (0.1-0.3): (1).

The protein localises to the plastid. Its subcellular location is the chloroplast thylakoid membrane. Functionally, the light-harvesting complex (LHC) functions as a light receptor, it captures and delivers excitation energy to photosystems with which it is closely associated. Energy is transferred from the carotenoid and chlorophyll C (or B) to chlorophyll A and the photosynthetic reaction centers where it is used to synthesize ATP and reducing power. The sequence is that of Fucoxanthin-chlorophyll a-c binding protein, chloroplastic from Chattonella marina var. antiqua (Red tide flagellate).